The following is a 197-amino-acid chain: Carnitine operon protein CaiE (197 aa).

Belongs to the transferase hexapeptide repeat family.

It functions in the pathway amine and polyamine metabolism; carnitine metabolism. Functionally, overproduction of CaiE stimulates the activity of CaiB and CaiD. This chain is Carnitine operon protein CaiE, found in Citrobacter koseri (strain ATCC BAA-895 / CDC 4225-83 / SGSC4696).